The following is a 457-amino-acid chain: Oxysterol-binding protein-related protein 3C (457 aa).

Disordered regions lie at residues Asn-37–Trp-61 and Gln-363–Lys-393. Basic and acidic residues-rich tracts occupy residues Gly-47–Trp-61 and Gly-370–Gly-391.

It belongs to the OSBP family. In terms of tissue distribution, expressed in roots, leaves, stems and flowers.

May be involved in the transport of sterols. This is Oxysterol-binding protein-related protein 3C (ORP3C) from Arabidopsis thaliana (Mouse-ear cress).